Here is a 223-residue protein sequence, read N- to C-terminus: Large ribosomal subunit protein uL4c (223 aa).

The segment at 61–96 (TKTRSEVEGGGKKPWKQKGTGNARAGSSNSPLWKGG) is disordered.

It belongs to the universal ribosomal protein uL4 family. As to quaternary structure, part of the 50S ribosomal subunit.

The protein resides in the plastid. It localises to the chloroplast. Probably binds the 23S rRNA. The polypeptide is Large ribosomal subunit protein uL4c (rpl4) (Guillardia theta (Cryptophyte)).